The sequence spans 594 residues: Protein FAM200C (594 aa).

This Homo sapiens (Human) protein is Protein FAM200C.